A 210-amino-acid polypeptide reads, in one-letter code: MINILILDTDIGIRNSLKLYLTEIGFHVEESTCVDQAWDILKRKKIDLIICDIIMPGMGGFNFLHQLRLNTDYCTLPVILLTTRGLTQDRIIGYKTGCDSYISKPFNIEELVVIIEGVLNRHTLIRLKLEKKQKNSFLLIKSNNLKINFTPREQSVLNLVVEGLLNKQIAANLNISIRIVEKYVSRLFIKTKTRNRAELVKYALENNLIT.

In terms of domain architecture, Response regulatory spans 3–119 (NILILDTDIG…ELVVIIEGVL (117 aa)). Asp52 is modified (4-aspartylphosphate). The region spanning 142 to 207 (SNNLKINFTP…ELVKYALENN (66 aa)) is the HTH luxR-type domain.

Its subcellular location is the plastid. The protein resides in the cyanelle. This chain is Probable transcriptional regulator ycf29 (ycf29), found in Cyanophora paradoxa.